A 1403-amino-acid polypeptide reads, in one-letter code: Centrosomal protein of 162 kDa (1403 aa).

The segment at 18–42 (KELSDDSFENSDKTARQSKKEMKKK) is disordered. Residues Ser-157 and Ser-160 each carry the phosphoserine modification. A disordered region spans residues 170–231 (QANAELTDDE…EKISVPKQEE (62 aa)). Residues 208 to 231 (TKDEEMPSKENSKSEKISVPKQEE) are compositionally biased toward basic and acidic residues. Ser-474 and Ser-475 each carry phosphoserine. Residues 476–504 (EEEGAVMGKQVPYKKARSAPPLLKRKPQS) are disordered. A compositionally biased stretch (basic residues) spans 487-502 (PYKKARSAPPLLKRKP). Coiled coils occupy residues 617 to 670 (KRVQ…QDNY), 698 to 1121 (VTGE…MLSN), 1171 to 1206 (EVLQENYRLKNELEGLISEKNELKMKSEAVMNQFEN), and 1235 to 1386 (CQNA…LHRQ).

The protein belongs to the CEP162 family. In terms of assembly, interacts with CEP290. Interacts with CPNE4. Interacts with alpha-tubulin.

The protein localises to the cytoplasm. Its subcellular location is the cytoskeleton. It is found in the microtubule organizing center. The protein resides in the centrosome. It localises to the centriole. The protein localises to the spindle. Its subcellular location is the nucleus. Functionally, required to promote assembly of the transition zone in primary cilia. Acts by specifically recognizing and binding the axonemal microtubule. Localizes to the distal ends of centrioles before ciliogenesis and directly binds to axonemal microtubule, thereby promoting and restricting transition zone formation specifically at the cilia base. Required to mediate CEP290 association with microtubules. This Homo sapiens (Human) protein is Centrosomal protein of 162 kDa (CEP162).